Here is a 476-residue protein sequence, read N- to C-terminus: Inosine-5'-monophosphate dehydrogenase (476 aa).

CBS domains are found at residues 93–151 (IIRD…VKDI) and 152–211 (MTKD…TRDE). Residues Asp242 and 292–294 (GIG) each bind NAD(+). Positions 294 and 296 each coordinate K(+). IMP is bound at residue Ser297. Residue Cys299 coordinates K(+). Cys299 (thioimidate intermediate) is an active-site residue. IMP contacts are provided by residues 334 to 336 (DGG), 357 to 358 (GY), and 381 to 385 (YRGMG). Arg398 acts as the Proton acceptor in catalysis. An IMP-binding site is contributed by Glu408. Glu462 provides a ligand contact to K(+).

The protein belongs to the IMPDH/GMPR family. As to quaternary structure, homotetramer. The cofactor is K(+).

It carries out the reaction IMP + NAD(+) + H2O = XMP + NADH + H(+). It participates in purine metabolism; XMP biosynthesis via de novo pathway; XMP from IMP: step 1/1. Mycophenolic acid (MPA) is a non-competitive inhibitor that prevents formation of the closed enzyme conformation by binding to the same site as the amobile flap. In contrast, mizoribine monophosphate (MZP) is a competitive inhibitor that induces the closed conformation. MPA is a potent inhibitor of mammalian IMPDHs but a poor inhibitor of the bacterial enzymes. MZP is a more potent inhibitor of bacterial IMPDH. Its function is as follows. Catalyzes the conversion of inosine 5'-phosphate (IMP) to xanthosine 5'-phosphate (XMP), the first committed and rate-limiting step in the de novo synthesis of guanine nucleotides, and therefore plays an important role in the regulation of cell growth. The chain is Inosine-5'-monophosphate dehydrogenase from Korarchaeum cryptofilum (strain OPF8).